A 26-amino-acid polypeptide reads, in one-letter code: Delta-hemolysin (26 aa).

An N-formylmethionine modification is found at M1.

The protein belongs to the delta-lysin family.

The protein localises to the secreted. The protein resides in the host cell membrane. Its function is as follows. Lyses erythrocytes and many other mammalian cells. The chain is Delta-hemolysin (hld) from Staphylococcus aureus (strain Mu50 / ATCC 700699).